A 38-amino-acid chain; its full sequence is Photosystem II reaction center protein L (38 aa).

Residues 17 to 37 (SLYWGLLLIFVLAILFSSYIF) form a helical membrane-spanning segment.

This sequence belongs to the PsbL family. PSII is composed of 1 copy each of membrane proteins PsbA, PsbB, PsbC, PsbD, PsbE, PsbF, PsbH, PsbI, PsbJ, PsbK, PsbL, PsbM, PsbT, PsbX, PsbY, PsbZ, Psb30/Ycf12, at least 3 peripheral proteins of the oxygen-evolving complex and a large number of cofactors. It forms dimeric complexes.

Its subcellular location is the plastid. The protein localises to the chloroplast thylakoid membrane. In terms of biological role, one of the components of the core complex of photosystem II (PSII). PSII is a light-driven water:plastoquinone oxidoreductase that uses light energy to abstract electrons from H(2)O, generating O(2) and a proton gradient subsequently used for ATP formation. It consists of a core antenna complex that captures photons, and an electron transfer chain that converts photonic excitation into a charge separation. This subunit is found at the monomer-monomer interface and is required for correct PSII assembly and/or dimerization. The chain is Photosystem II reaction center protein L from Mesostigma viride (Green alga).